The following is a 782-amino-acid chain: Protein VAC14 homolog (782 aa).

Met-1 is subject to N-acetylmethionine. 4 HEAT repeats span residues 5 to 42 (KDFAPLTPNIVRALNDKLYEKRKVAALEIEKLVREFVA), 89 to 126 (LYLKELIEPVLTCFNDADSRLRYYACEALYNIVKVARG), 171 to 208 (FDLVSFIPLLRERIYSNNQYARQFIISWILVLESVPDI), and 212 to 249 (DYLPEILDGLFQILGDNGKEIRKMCEVVLGEFLKEIKK). The residue at position 11 (Thr-11) is a Phosphothreonine. 2 disordered regions span residues 335-372 (EDDELDELRPGQRQAEPTPDDALPKQEGTASGGPDGSC) and 471-517 (SSPA…LECS). The stretch at 438–475 (RHTDSLFPILLQTLSDESDEVILKDLEVLAEIASSPAG) is one HEAT 5 repeat. Residues 478-488 (DDPGPLDGPDL) show a composition bias toward low complexity. A Phosphothreonine modification is found at Thr-499. A compositionally biased stretch (polar residues) spans 506–517 (LNTSGTKGLECS). A Phosphoserine modification is found at Ser-517. One copy of the HEAT 6 repeat lies at 560–598 (LNAENIFHSMADILLREEDLKFASTMVHALNTILLTSTE). At Ser-743 the chain carries Phosphoserine. The mediates interaction with the PDZ domain of NOS1 stretch occupies residues 773 to 777 (GDHLD).

This sequence belongs to the VAC14 family. In terms of assembly, forms pentamers. Component of the PI(3,5)P2 regulatory complex/PAS complex, at least composed of PIKFYVE, FIG4 and VAC14. VAC14 nucleates the assembly of the complex and serves as a scaffold by pentamerizing into a star-shaped structure, which can bind a single copy each of PIKFYVE and FIG4 and coordinates their activities. Interacts with NOS1. (Microbial infection) Interacts with HTLV-1 Tax. As to expression, ubiquitously expressed.

The protein resides in the endosome membrane. It is found in the microsome membrane. Scaffold protein component of the PI(3,5)P2 regulatory complex which regulates both the synthesis and turnover of phosphatidylinositol 3,5-bisphosphate (PtdIns(3,5)P2). Pentamerizes into a star-shaped structure and nucleates the assembly of the complex. The pentamer binds a single copy each of PIKFYVE and FIG4 and coordinates both PIKfyve kinase activity and FIG4 phosphatase activity, being required to maintain normal levels of phosphatidylinositol 3-phosphate (PtdIns(3)P) and phosphatidylinositol 5-phosphate (PtdIns(5)P). Plays a role in the biogenesis of endosome carrier vesicles (ECV) / multivesicular bodies (MVB) transport intermediates from early endosomes. In Homo sapiens (Human), this protein is Protein VAC14 homolog (VAC14).